The following is a 2386-amino-acid chain: Protein kinase rad3 (2386 aa).

The FAT domain maps to 1386–1943; that stretch reads TLGIVSLNCG…LWQLMATIKS (558 aa). One can recognise a PI3K/PI4K catalytic domain in the interval 2052 to 2370; sequence FEDEVDIMNS…QIQELIKSAV (319 aa). Positions 2058-2064 are G-loop; sequence IMNSLQK. The interval 2227 to 2235 is catalytic loop; the sequence is GLGDRHGEN. The tract at residues 2247–2271 is activation loop; that stretch reads HVDFNCLFDKGLTFEKPEKVPFRLT. Residues 2354 to 2386 enclose the FATC domain; it reads IPLSIEGQIQELIKSAVNPKNLVEMYIGWAAYF.

The protein belongs to the PI3/PI4-kinase family. ATM subfamily. Interacts with crb2 (via BRCT domain). Interacts with chk1.

Its subcellular location is the nucleus. It catalyses the reaction L-seryl-[protein] + ATP = O-phospho-L-seryl-[protein] + ADP + H(+). The enzyme catalyses L-threonyl-[protein] + ATP = O-phospho-L-threonyl-[protein] + ADP + H(+). In terms of biological role, serine/threonine kinase which activates checkpoint signaling upon genotoxic stresses. Involved in G2 arrest following DNA damage where it phosphorylates chk1. Phosphorylation of 'Thr-73' and 'Ser-80' of checkpoint mediator crb2 promotes its interaction with chk1. It is also involved in the dependence of mitosis on the completion of DNA replication. This is Protein kinase rad3 (rad3) from Schizosaccharomyces pombe (strain 972 / ATCC 24843) (Fission yeast).